Reading from the N-terminus, the 349-residue chain is GTP 3',8-cyclase (349 aa).

Positions 24 to 249 constitute a Radical SAM core domain; that stretch reads PFGRAITYLR…VDSDYQTGGP (226 aa). Arginine 33 provides a ligand contact to GTP. [4Fe-4S] cluster is bound by residues cysteine 40 and cysteine 44. Tyrosine 46 is a binding site for S-adenosyl-L-methionine. [4Fe-4S] cluster is bound at residue cysteine 47. Arginine 82 serves as a coordination point for GTP. Glycine 86 contacts S-adenosyl-L-methionine. Threonine 116 contacts GTP. S-adenosyl-L-methionine is bound at residue serine 140. Lysine 176 provides a ligand contact to GTP. Methionine 210 contributes to the S-adenosyl-L-methionine binding site. Residues cysteine 273 and cysteine 276 each coordinate [4Fe-4S] cluster. Position 278–280 (278–280) interacts with GTP; the sequence is RVR. Position 290 (cysteine 290) interacts with [4Fe-4S] cluster.

This sequence belongs to the radical SAM superfamily. MoaA family. In terms of assembly, monomer and homodimer. It depends on [4Fe-4S] cluster as a cofactor.

It catalyses the reaction GTP + AH2 + S-adenosyl-L-methionine = (8S)-3',8-cyclo-7,8-dihydroguanosine 5'-triphosphate + 5'-deoxyadenosine + L-methionine + A + H(+). It participates in cofactor biosynthesis; molybdopterin biosynthesis. Its function is as follows. Catalyzes the cyclization of GTP to (8S)-3',8-cyclo-7,8-dihydroguanosine 5'-triphosphate. The sequence is that of GTP 3',8-cyclase from Agrobacterium fabrum (strain C58 / ATCC 33970) (Agrobacterium tumefaciens (strain C58)).